The chain runs to 122 residues: Large ribosomal subunit protein uL14c (122 aa).

The protein belongs to the universal ribosomal protein uL14 family. As to quaternary structure, part of the 50S ribosomal subunit.

It is found in the plastid. The protein resides in the chloroplast. In terms of biological role, binds to 23S rRNA. The protein is Large ribosomal subunit protein uL14c of Guizotia abyssinica (Niger).